A 307-amino-acid chain; its full sequence is tRNA dimethylallyltransferase (307 aa).

11-18 (GPTGSGKT) contacts ATP. 13 to 18 (TGSGKT) provides a ligand contact to substrate. The tract at residues 36–39 (DSVA) is interaction with substrate tRNA.

Belongs to the IPP transferase family. In terms of assembly, monomer. Requires Mg(2+) as cofactor.

The enzyme catalyses adenosine(37) in tRNA + dimethylallyl diphosphate = N(6)-dimethylallyladenosine(37) in tRNA + diphosphate. In terms of biological role, catalyzes the transfer of a dimethylallyl group onto the adenine at position 37 in tRNAs that read codons beginning with uridine, leading to the formation of N6-(dimethylallyl)adenosine (i(6)A). The polypeptide is tRNA dimethylallyltransferase (Koribacter versatilis (strain Ellin345)).